The chain runs to 242 residues: ATP synthase subunit a (242 aa).

The next 6 helical transmembrane spans lie at 29–49 (SSIY…LAFY), 84–104 (FIPL…LGMT), 114–134 (IIVT…VGFV), 140–160 (FLTL…MIVI), 181–201 (MAGH…MIYL), and 203–223 (FLPI…AILQ).

Belongs to the ATPase A chain family. In terms of assembly, F-type ATPases have 2 components, CF(1) - the catalytic core - and CF(0) - the membrane proton channel. CF(1) has five subunits: alpha(3), beta(3), gamma(1), delta(1), epsilon(1). CF(0) has three main subunits: a(1), b(2) and c(9-12). The alpha and beta chains form an alternating ring which encloses part of the gamma chain. CF(1) is attached to CF(0) by a central stalk formed by the gamma and epsilon chains, while a peripheral stalk is formed by the delta and b chains.

The protein localises to the cell inner membrane. Functionally, key component of the proton channel; it plays a direct role in the translocation of protons across the membrane. The protein is ATP synthase subunit a of Rickettsia conorii (strain ATCC VR-613 / Malish 7).